We begin with the raw amino-acid sequence, 132 residues long: D-ribose pyranase (132 aa).

H20 (proton donor) is an active-site residue. Substrate is bound by residues D28, H99, and 121 to 123 (YAN).

This sequence belongs to the RbsD / FucU family. RbsD subfamily. In terms of assembly, homodecamer.

Its subcellular location is the cytoplasm. The enzyme catalyses beta-D-ribopyranose = beta-D-ribofuranose. It functions in the pathway carbohydrate metabolism; D-ribose degradation; D-ribose 5-phosphate from beta-D-ribopyranose: step 1/2. Functionally, catalyzes the interconversion of beta-pyran and beta-furan forms of D-ribose. The protein is D-ribose pyranase of Chromobacterium violaceum (strain ATCC 12472 / DSM 30191 / JCM 1249 / CCUG 213 / NBRC 12614 / NCIMB 9131 / NCTC 9757 / MK).